Here is a 288-residue protein sequence, read N- to C-terminus: Probable syndecan (288 aa).

A signal peptide spans 1–26 (MILKLNFCLSTYSVLILLSLSTQAFA). At 27–231 (ANQAKTKVVP…ETLANGFYAA (205 aa)) the chain is on the extracellular side. The interval 67–175 (EVNGSGYPTD…NIHNDEDFFT (109 aa)) is disordered. A glycan (N-linked (GlcNAc...) asparagine) is linked at Asn69. O-linked (Xyl...) (glycosaminoglycan) serine glycans are attached at residues Ser71 and Ser86. Positions 89 to 104 (PPSSATTKSDKVTSPS) are enriched in polar residues. Over residues 106–124 (AVVTAKPTTVPTTTASFKP) the composition is skewed to low complexity. Positions 141-164 (VEEDEDDDEDEDEDDEDDEEDFAD) are enriched in acidic residues. An O-linked (Xyl...) (glycosaminoglycan) serine glycan is attached at Ser214. A helical membrane pass occupies residues 232–252 (IAGGVLVAVITAILLVLFVVF). The Cytoplasmic portion of the chain corresponds to 253–288 (RIRKKDEGSYALDEPKQARPYASYGYTKASTKEFYA).

Belongs to the syndecan proteoglycan family.

The protein localises to the membrane. The protein resides in the cell surface. Its subcellular location is the cell junction. It localises to the cytoplasm. In terms of biological role, cell surface proteoglycan that bears heparan sulfate. Required for correct mitotic spindle orientation of the ABar blastomere division plane and this may be through modulation of astral microtubule array, and in association with the wnt-signaling proteins mig-5 and dsh-2. Involved in the migration of AQR and PQR neurons, which descend from the Q neuroblasts. Promotes the axon guidance of D-type motor neurons. This Caenorhabditis elegans protein is Probable syndecan.